The following is a 246-amino-acid chain: 2,3-bisphosphoglycerate-dependent phosphoglycerate mutase (246 aa).

Residues 9–16 (RHGQSAWN), 22–23 (TG), Arg61, 88–91 (ERHY), Lys99, 115–116 (RR), and 181–182 (GN) contribute to the substrate site. The active-site Tele-phosphohistidine intermediate is His10. The active-site Proton donor/acceptor is the Glu88.

Belongs to the phosphoglycerate mutase family. BPG-dependent PGAM subfamily.

The enzyme catalyses (2R)-2-phosphoglycerate = (2R)-3-phosphoglycerate. Its pathway is carbohydrate degradation; glycolysis; pyruvate from D-glyceraldehyde 3-phosphate: step 3/5. In terms of biological role, catalyzes the interconversion of 2-phosphoglycerate and 3-phosphoglycerate. The sequence is that of 2,3-bisphosphoglycerate-dependent phosphoglycerate mutase from Bifidobacterium longum (strain DJO10A).